The chain runs to 475 residues: GTPase Der (475 aa).

EngA-type G domains follow at residues 2–166 (LRIA…NIPE) and 213–386 (LKIA…ETVS). Residues 8–15 (GRPNVGKS), 55–59 (DTGGV), 118–121 (NKAD), 219–226 (GRPNVGKS), 266–270 (DTAGL), and 331–334 (NKWD) contribute to the GTP site. The region spanning 387-471 (RKVPTPVVNK…PFDLEIKEKA (85 aa)) is the KH-like domain.

Belongs to the TRAFAC class TrmE-Era-EngA-EngB-Septin-like GTPase superfamily. EngA (Der) GTPase family. As to quaternary structure, associates with the 50S ribosomal subunit.

Its function is as follows. GTPase that plays an essential role in the late steps of ribosome biogenesis. The protein is GTPase Der of Chlamydia felis (strain Fe/C-56) (Chlamydophila felis).